The chain runs to 1698 residues: Protein 4.1 homolog (1698 aa).

The segment at 1 to 31 (MPAEIKPSAPAEPETPTKSKPKSSSSSHGKP) is disordered. Low complexity predominate over residues 12–27 (EPETPTKSKPKSSSSS). Residues 32-314 (ALARVTLLDG…EHHTFFRLMT (283 aa)) enclose the FERM domain. The hydrophilic stretch occupies residues 317–434 (PVSKSKMFPV…KEEKERKERE (118 aa)). Disordered stretches follow at residues 335–361 (GRTQAESTNTPVDRTPPKFNRTLSGAR) and 374–710 (EKEK…SDPT). A compositionally biased stretch (basic and acidic residues) spans 374 to 448 (EKEKVARKSS…EEKKKAEKAA (75 aa)). Over residues 449 to 461 (KAALAAGAAAGAA) the composition is skewed to low complexity. Residues serine 471, serine 474, and serine 478 each carry the phosphoserine modification. The span at 499-514 (KDGKDKSGKDKDKEVG) shows a compositional bias: basic and acidic residues. The segment covering 562 to 571 (DGNTSPTRKS) has biased composition (polar residues). Serine 566 carries the phosphoserine modification. The span at 579–589 (YDQDPNSRKSG) shows a compositional bias: basic and acidic residues. Residues 594-603 (EQLSPTSQQK) show a composition bias toward polar residues. Basic and acidic residues predominate over residues 618–627 (ALKETAEKLK). Serine 659 and serine 687 each carry phosphoserine. Polar residues predominate over residues 684–696 (RSYSPTKGPQGYS). Residue threonine 689 is modified to Phosphothreonine. A phosphoserine mark is found at serine 697, serine 1398, serine 1401, and serine 1402. The C-terminal (CTD) stretch occupies residues 1286 to 1698 (GEIVQVDPND…EKIEIQQQTQ (413 aa)). The residue at position 1407 (threonine 1407) is a Phosphothreonine. Residues 1509–1532 (LGKNAKTEQLEEKTVATTRTHDPN) are compositionally biased toward basic and acidic residues. A disordered region spans residues 1509 to 1599 (LGKNAKTEQL…SPLFTTSATT (91 aa)). Residues 1533 to 1554 (KQQQRVVTQEVKTTATVTSGDQ) show a composition bias toward polar residues. Low complexity predominate over residues 1561 to 1571 (VSSTSSGDSGT). Positions 1584–1599 (RTDNQKSPLFTTSATT) are enriched in polar residues. Serine 1590 is subject to Phosphoserine.

As to expression, at onset of germ band retraction, expression is seen in epidermis, hindgut and foregut. During retraction, expression extends to tracheal branches and salivary glands.

It localises to the cell junction. Its subcellular location is the septate junction. In terms of biological role, an integral component of the septate junction. May play a role in cell-cell interactions that are necessary for proper development. Vital for embryonic development. The protein is Protein 4.1 homolog (cora) of Drosophila melanogaster (Fruit fly).